The chain runs to 411 residues: Lissencephaly-1 homolog (411 aa).

Residues Q9–T41 form the LisH domain. A coiled-coil region spans residues T56–A83. 7 WD repeats span residues G106 to K147, G148 to K187, G191 to T230, G233 to E272, D275 to T334, G337 to T376, and A379 to R411.

This sequence belongs to the WD repeat LIS1/nudF family.

It is found in the cytoplasm. The protein localises to the cytoskeleton. The protein resides in the microtubule organizing center. It localises to the centrosome. Its function is as follows. Positively regulates the activity of the minus-end directed microtubule motor protein dynein. May enhance dynein-mediated microtubule sliding by targeting dynein to the microtubule plus end. Required for several dynein- and microtubule-dependent processes. In Drosophila ananassae (Fruit fly), this protein is Lissencephaly-1 homolog.